A 459-amino-acid chain; its full sequence is Chromosomal replication initiator protein DnaA (459 aa).

Residues 1–74 (MMEMPIDNLW…ANVVQSILGH (74 aa)) are domain I, interacts with DnaA modulators. The tract at residues 74–117 (HPVEIYITVAKGEEFEEIGGGGEWELPTTNIINETPNQNRQPNT) is domain II. The interval 118–334 (ELNAKYVFSR…GALTRALAYI (217 aa)) is domain III, AAA+ region. Residues glycine 162, glycine 164, lysine 165, and threonine 166 each contribute to the ATP site. The interval 335–459 (SIWGLPMTVA…IKMNSRSRKP (125 aa)) is domain IV, binds dsDNA.

Belongs to the DnaA family. Oligomerizes as a right-handed, spiral filament on DNA at oriC.

Its subcellular location is the cytoplasm. Functionally, plays an essential role in the initiation and regulation of chromosomal replication. ATP-DnaA binds to the origin of replication (oriC) to initiate formation of the DNA replication initiation complex once per cell cycle. Binds the DnaA box (a 9 base pair repeat at the origin) and separates the double-stranded (ds)DNA. Forms a right-handed helical filament on oriC DNA; dsDNA binds to the exterior of the filament while single-stranded (ss)DNA is stabiized in the filament's interior. The ATP-DnaA-oriC complex binds and stabilizes one strand of the AT-rich DNA unwinding element (DUE), permitting loading of DNA polymerase. After initiation quickly degrades to an ADP-DnaA complex that is not apt for DNA replication. Binds acidic phospholipids. The protein is Chromosomal replication initiator protein DnaA of Nostoc sp. (strain PCC 7120 / SAG 25.82 / UTEX 2576).